The following is a 353-amino-acid chain: Casein kinase II subunit alpha (353 aa).

The Protein kinase domain occupies 39-324 (YQLVRKLGRG…AREAMDHPYF (286 aa)). ATP is bound by residues 45–53 (LGRGKYSEV) and K68. Catalysis depends on D156, which acts as the Proton acceptor. The tract at residues 334 to 353 (MVSSNSPTPNALQGPISTTE) is disordered.

This sequence belongs to the protein kinase superfamily. Ser/Thr protein kinase family. CK2 subfamily. As to quaternary structure, tetramer of two alpha and two beta chains.

It catalyses the reaction L-seryl-[protein] + ATP = O-phospho-L-seryl-[protein] + ADP + H(+). It carries out the reaction L-threonyl-[protein] + ATP = O-phospho-L-threonyl-[protein] + ADP + H(+). Functionally, casein kinases are operationally defined by their preferential utilization of acidic proteins such as caseins as substrates. The alpha chain contains the catalytic site. May participate in Wnt signaling. The chain is Casein kinase II subunit alpha from Spodoptera frugiperda (Fall armyworm).